A 337-amino-acid polypeptide reads, in one-letter code: Terpene cyclase (337 aa).

The chain crosses the membrane as a helical span at residues Ala5–Val25. N-linked (GlcNAc...) asparagine glycosylation occurs at Asn65. The next 7 helical transmembrane spans lie at Ile72 to Cys92, Gly111 to Ile131, Ala149 to Leu169, Ile177 to Ile197, Val222 to Phe242, Leu267 to Ile287, and Leu298 to Trp318.

The protein belongs to the membrane-bound ascI terpene cyclase family.

It localises to the membrane. It functions in the pathway antifungal biosynthesis. Functionally, cyclase; part of the gene cluster that mediates the biosynthesis of the tetrahydropyranyl antifungal agent lanomycin that acts as an inhibitor of CYP51 and blocks the ergosterol biosynthesis. The biosynthesis probably begins with the formation of an hexaketide, followed by methionine mediated alkylation of C-2 and C-6, and methylation of the reduced C-3 oxygen, pyran forming reductive ring closure, oxygenation of C-4, beta-keto reduction, enoyl reduction and dehydration of the remaining oxygens, and finally, acylation with glycine to complete the biosynthesis. This is Terpene cyclase from Pyrenophora dematioidea (Helminthosporium dematioideum).